Consider the following 645-residue polypeptide: 1,4-alpha-glucan branching enzyme GlgB (645 aa).

The active-site Nucleophile is the Asp-309. Residue Glu-352 is the Proton donor of the active site. The disordered stretch occupies residues 619–645 (VKTRKGSKKQDGSKTKVRSNVTSRGKR). Residues 636–645 (RSNVTSRGKR) are compositionally biased toward polar residues.

Belongs to the glycosyl hydrolase 13 family. GlgB subfamily. In terms of assembly, monomer.

The catalysed reaction is Transfers a segment of a (1-&gt;4)-alpha-D-glucan chain to a primary hydroxy group in a similar glucan chain.. It functions in the pathway glycan biosynthesis; glycogen biosynthesis. Its function is as follows. Catalyzes the formation of the alpha-1,6-glucosidic linkages in glycogen by scission of a 1,4-alpha-linked oligosaccharide from growing alpha-1,4-glucan chains and the subsequent attachment of the oligosaccharide to the alpha-1,6 position. This Bacillus cereus (strain G9842) protein is 1,4-alpha-glucan branching enzyme GlgB.